The following is a 955-amino-acid chain: Glycine dehydrogenase (decarboxylating) (955 aa).

The residue at position 705 (lysine 705) is an N6-(pyridoxal phosphate)lysine.

This sequence belongs to the GcvP family. The glycine cleavage system is composed of four proteins: P, T, L and H. Requires pyridoxal 5'-phosphate as cofactor.

The catalysed reaction is N(6)-[(R)-lipoyl]-L-lysyl-[glycine-cleavage complex H protein] + glycine + H(+) = N(6)-[(R)-S(8)-aminomethyldihydrolipoyl]-L-lysyl-[glycine-cleavage complex H protein] + CO2. The glycine cleavage system catalyzes the degradation of glycine. The P protein binds the alpha-amino group of glycine through its pyridoxal phosphate cofactor; CO(2) is released and the remaining methylamine moiety is then transferred to the lipoamide cofactor of the H protein. The chain is Glycine dehydrogenase (decarboxylating) from Aliivibrio fischeri (strain ATCC 700601 / ES114) (Vibrio fischeri).